A 546-amino-acid polypeptide reads, in one-letter code: Crossover junction endonuclease EME1A (546 aa).

Disordered stretches follow at residues 1-55 and 88-232; these read MSDF…FLDE and VISL…REKQ. Over residues 28–49 the composition is skewed to polar residues; that stretch reads PTDLNLDTEPSLQKQPPGSAST. Basic and acidic residues-rich tracts occupy residues 103–120 and 149–167; these read SSKK…KPCR and DAIE…VEKM. Polar residues predominate over residues 173–183; sequence TITSKSTSLSA. The stretch at 188-245 forms a coiled coil; it reads KKKMSKDEKTRAAEEKKLQKEQEKLQKAASKAEDAEHKKLEREKQKWAKEKDKALKCI. Residues 192-232 show a composition bias toward basic and acidic residues; the sequence is SKDEKTRAAEEKKLQKEQEKLQKAASKAEDAEHKKLEREKQ. Residues 278 to 478 enclose the ERCC4 domain; sequence NPIQRSIVWT…PSLKSLLKVY (201 aa).

This sequence belongs to the EME1/MMS4 family. In terms of assembly, forms a heterodimer with MUS81. It depends on Mg(2+) as a cofactor. Ca(2+) serves as cofactor.

Its subcellular location is the nucleus. Its function is as follows. Interacts with MUS81 to form a DNA structure-specific endonuclease with substrate preference for branched DNA structures with a 5'-end at the branch nick. Typical substrates include 3'-flap structures, D-loops, replication forks, nicked Holliday junctions and also intact Holliday junctions with a reduced efficiency. May be required in mitosis for the processing of stalled or collapsed replication fork intermediates. Plays a role in DNA repair and in genotoxic stress-induced homologous recombination (HR) in somatic cells. Mediates a subset of meiotic recombination events that are insensitive to crossover interference. The polypeptide is Crossover junction endonuclease EME1A (EME1A) (Arabidopsis thaliana (Mouse-ear cress)).